A 420-amino-acid chain; its full sequence is Serine--tRNA ligase (420 aa).

L-serine is bound at residue 229–231 (TAE). 260–262 (RAE) contacts ATP. Position 283 (glutamate 283) interacts with L-serine. 347–350 (EISS) provides a ligand contact to ATP. Serine 382 contacts L-serine.

The protein belongs to the class-II aminoacyl-tRNA synthetase family. Type-1 seryl-tRNA synthetase subfamily. As to quaternary structure, homodimer. The tRNA molecule binds across the dimer.

The protein resides in the cytoplasm. It catalyses the reaction tRNA(Ser) + L-serine + ATP = L-seryl-tRNA(Ser) + AMP + diphosphate + H(+). The enzyme catalyses tRNA(Sec) + L-serine + ATP = L-seryl-tRNA(Sec) + AMP + diphosphate + H(+). It functions in the pathway aminoacyl-tRNA biosynthesis; selenocysteinyl-tRNA(Sec) biosynthesis; L-seryl-tRNA(Sec) from L-serine and tRNA(Sec): step 1/1. In terms of biological role, catalyzes the attachment of serine to tRNA(Ser). Is also able to aminoacylate tRNA(Sec) with serine, to form the misacylated tRNA L-seryl-tRNA(Sec), which will be further converted into selenocysteinyl-tRNA(Sec). This is Serine--tRNA ligase from Caldicellulosiruptor saccharolyticus (strain ATCC 43494 / DSM 8903 / Tp8T 6331).